The following is a 791-amino-acid chain: Endonuclease MutS2 (791 aa).

339-346 (GPNTGGKT) is a binding site for ATP. A Smr domain is found at 715–790 (LDLRGERYET…GSGVTIADLK (76 aa)).

The protein belongs to the DNA mismatch repair MutS family. MutS2 subfamily. As to quaternary structure, homodimer. Binds to stalled ribosomes, contacting rRNA.

Its function is as follows. Endonuclease that is involved in the suppression of homologous recombination and thus may have a key role in the control of bacterial genetic diversity. Functionally, acts as a ribosome collision sensor, splitting the ribosome into its 2 subunits. Detects stalled/collided 70S ribosomes which it binds and splits by an ATP-hydrolysis driven conformational change. Acts upstream of the ribosome quality control system (RQC), a ribosome-associated complex that mediates the extraction of incompletely synthesized nascent chains from stalled ribosomes and their subsequent degradation. Probably generates substrates for RQC. The sequence is that of Endonuclease MutS2 from Halothermothrix orenii (strain H 168 / OCM 544 / DSM 9562).